The chain runs to 387 residues: Fructose-1,6-bisphosphate aldolase/phosphatase (387 aa).

Asp-13 serves as the catalytic Proton acceptor; for FBP phosphatase activity. Asp-13, His-20, Asp-54, and Asp-55 together coordinate Mg(2+). His-20 is a beta-D-fructose 1,6-bisphosphate binding site. His-20 contacts dihydroxyacetone phosphate. Residue Tyr-92 coordinates beta-D-fructose 1,6-bisphosphate. Gln-96 is a Mg(2+) binding site. 105-106 (GN) is a beta-D-fructose 1,6-bisphosphate binding site. Mg(2+) is bound at residue Asp-133. Lys-134 is a binding site for beta-D-fructose 1,6-bisphosphate. Position 134 (Lys-134) interacts with dihydroxyacetone phosphate. The active-site Proton donor/acceptor; for FBP aldolase activity is Tyr-229. 3 residues coordinate Mg(2+): Lys-232, Asp-233, and Asp-234. Residue Lys-232 is the Schiff-base intermediate with DHAP; for FBP aldolase activity of the active site. Beta-D-fructose 1,6-bisphosphate-binding positions include 242 to 243 (QS), Arg-266, Asp-287, and Tyr-348. Residues Arg-266 and Asp-287 each coordinate dihydroxyacetone phosphate.

This sequence belongs to the FBP aldolase/phosphatase family. Homooctamer; dimer of tetramers. Requires Mg(2+) as cofactor.

The catalysed reaction is beta-D-fructose 1,6-bisphosphate + H2O = beta-D-fructose 6-phosphate + phosphate. It carries out the reaction beta-D-fructose 1,6-bisphosphate = D-glyceraldehyde 3-phosphate + dihydroxyacetone phosphate. It participates in carbohydrate biosynthesis; gluconeogenesis. Functionally, catalyzes two subsequent steps in gluconeogenesis: the aldol condensation of dihydroxyacetone phosphate (DHAP) and glyceraldehyde-3-phosphate (GA3P) to fructose-1,6-bisphosphate (FBP), and the dephosphorylation of FBP to fructose-6-phosphate (F6P). The sequence is that of Fructose-1,6-bisphosphate aldolase/phosphatase from Ignicoccus hospitalis (strain KIN4/I / DSM 18386 / JCM 14125).